Reading from the N-terminus, the 103-residue chain is Large ribosomal subunit protein bL21 (103 aa).

This sequence belongs to the bacterial ribosomal protein bL21 family. Part of the 50S ribosomal subunit. Contacts protein L20.

This protein binds to 23S rRNA in the presence of protein L20. This is Large ribosomal subunit protein bL21 from Yersinia pseudotuberculosis serotype O:1b (strain IP 31758).